We begin with the raw amino-acid sequence, 262 residues long: Probable DNA polymerase sliding clamp 1 (262 aa).

Residues 67-86 (KCEHTYELGVNVLNMFKLLR) mediate DNA binding.

It belongs to the PCNA family.

Its function is as follows. Sliding clamp subunit. Responsible for tethering the catalytic subunit of DNA polymerase to DNA during high-speed replication. This is Probable DNA polymerase sliding clamp 1 from Chlorella (PBCV-1).